Consider the following 775-residue polypeptide: Kojibiose phosphorylase (775 aa).

Residue W361–D362 participates in substrate binding. The active-site Proton donor is E501. K614–Q615 contributes to the substrate binding site.

This sequence belongs to the glycosyl hydrolase 65 family. Homohexamer.

The enzyme catalyses kojibiose + phosphate = beta-D-glucose 1-phosphate + D-glucose. With respect to regulation, inhibited by Hg(2+) and Pb(2+). Its function is as follows. Catalyzes the reversible phosphorolysis of kojibiose into beta-D-glucose 1-phosphate (Glc1P) and D-glucose. Can act with alpha-1,2-oligoglucans, such as selaginose, but more slowly. Inactive when disaccharides with linkages other than alpha-1,2 linkages, such as sophorose, trehalose, neotrehalose, nigerose, laminaribiose, maltose, cellobiose, isomaltose, gentiobiose, sucrose and lactose, are used as substrates. In contrast, shows broad specificity for the reverse reaction. Various monosaccharides and disaccharides having a glucosyl residue at the non-reducing end are effective acceptors. The protein is Kojibiose phosphorylase of Thermoanaerobacter brockii (Thermoanaerobium brockii).